Reading from the N-terminus, the 386-residue chain is Cystathionine gamma-synthase (386 aa).

Position 198 is an N6-(pyridoxal phosphate)lysine (lysine 198).

Belongs to the trans-sulfuration enzymes family. As to quaternary structure, homotetramer. Pyridoxal 5'-phosphate is required as a cofactor.

Its subcellular location is the cytoplasm. It catalyses the reaction O-succinyl-L-homoserine + L-cysteine = L,L-cystathionine + succinate + H(+). It participates in amino-acid biosynthesis; L-methionine biosynthesis via de novo pathway; L-cystathionine from O-succinyl-L-homoserine: step 1/1. In terms of biological role, catalyzes the formation of L-cystathionine from O-succinyl-L-homoserine (OSHS) and L-cysteine, via a gamma-replacement reaction. In the absence of thiol, catalyzes gamma-elimination to form 2-oxobutanoate, succinate and ammonia. The chain is Cystathionine gamma-synthase (metB) from Escherichia coli (strain K12).